Here is a 289-residue protein sequence, read N- to C-terminus: Phytoene synthase (289 aa).

The protein belongs to the phytoene/squalene synthase family. The cofactor is ATP. Mn(2+) serves as cofactor. It depends on Mg(2+) as a cofactor.

The protein operates within carotenoid biosynthesis; phytoene biosynthesis. In terms of biological role, involved in the biosynthesis of carotenoids. Catalyzes the condensation of two molecules of geranylgeranyl diphosphate (GGPP) to give prephytoene diphosphate (PPPP) and the subsequent rearrangement of the cyclopropylcarbinyl intermediate to yield phytoene. In Thermus thermophilus (strain ATCC BAA-163 / DSM 7039 / HB27), this protein is Phytoene synthase (crtB).